Reading from the N-terminus, the 386-residue chain is Putative F-box/kelch-repeat protein At3g17280 (386 aa).

The F-box domain occupies 1–48 (MTTISDLPYDLLPEILSRLPTKSIPKLKTTCKKWYALFKDPKFVEKKL). Kelch repeat units lie at residues 155–203 (SYKI…LKES) and 340–386 (RIYI…IVEV).

The sequence is that of Putative F-box/kelch-repeat protein At3g17280 from Arabidopsis thaliana (Mouse-ear cress).